A 492-amino-acid polypeptide reads, in one-letter code: ATP synthase subunit beta, chloroplastic (492 aa).

Residue 170–177 (GGAGVGKT) coordinates ATP.

It belongs to the ATPase alpha/beta chains family. As to quaternary structure, F-type ATPases have 2 components, CF(1) - the catalytic core - and CF(0) - the membrane proton channel. CF(1) has five subunits: alpha(3), beta(3), gamma(1), delta(1), epsilon(1). CF(0) has four main subunits: a(1), b(1), b'(1) and c(9-12).

The protein localises to the plastid. Its subcellular location is the chloroplast thylakoid membrane. It catalyses the reaction ATP + H2O + 4 H(+)(in) = ADP + phosphate + 5 H(+)(out). Produces ATP from ADP in the presence of a proton gradient across the membrane. The catalytic sites are hosted primarily by the beta subunits. The sequence is that of ATP synthase subunit beta, chloroplastic from Marchantia polymorpha (Common liverwort).